The primary structure comprises 176 residues: ATP synthase subunit b, chloroplastic (176 aa).

A helical transmembrane segment spans residues 27–49 (ILNLAAVFALLAYVGTDFVSSLL).

This sequence belongs to the ATPase B chain family. As to quaternary structure, F-type ATPases have 2 components, F(1) - the catalytic core - and F(0) - the membrane proton channel. F(1) has five subunits: alpha(3), beta(3), gamma(1), delta(1), epsilon(1). F(0) has four main subunits: a(1), b(1), b'(1) and c(10-14). The alpha and beta chains form an alternating ring which encloses part of the gamma chain. F(1) is attached to F(0) by a central stalk formed by the gamma and epsilon chains, while a peripheral stalk is formed by the delta, b and b' chains.

Its subcellular location is the plastid. The protein localises to the chloroplast thylakoid membrane. Its function is as follows. F(1)F(0) ATP synthase produces ATP from ADP in the presence of a proton or sodium gradient. F-type ATPases consist of two structural domains, F(1) containing the extramembraneous catalytic core and F(0) containing the membrane proton channel, linked together by a central stalk and a peripheral stalk. During catalysis, ATP synthesis in the catalytic domain of F(1) is coupled via a rotary mechanism of the central stalk subunits to proton translocation. In terms of biological role, component of the F(0) channel, it forms part of the peripheral stalk, linking F(1) to F(0). The sequence is that of ATP synthase subunit b, chloroplastic from Nephroselmis olivacea (Green alga).